A 157-amino-acid polypeptide reads, in one-letter code: 2-C-methyl-D-erythritol 2,4-cyclodiphosphate synthase (157 aa).

A divalent metal cation is bound by residues Asp9 and His11. Residues 9–11 and 35–36 each bind 4-CDP-2-C-methyl-D-erythritol 2-phosphate; these read DVH and HS. His43 lines the a divalent metal cation pocket. Residues 57–59, 62–66, 133–136, Phe140, and Lys143 each bind 4-CDP-2-C-methyl-D-erythritol 2-phosphate; these read DIG, FPETD, and TTME.

This sequence belongs to the IspF family. Homotrimer. The cofactor is a divalent metal cation.

The catalysed reaction is 4-CDP-2-C-methyl-D-erythritol 2-phosphate = 2-C-methyl-D-erythritol 2,4-cyclic diphosphate + CMP. The protein operates within isoprenoid biosynthesis; isopentenyl diphosphate biosynthesis via DXP pathway; isopentenyl diphosphate from 1-deoxy-D-xylulose 5-phosphate: step 4/6. Functionally, involved in the biosynthesis of isopentenyl diphosphate (IPP) and dimethylallyl diphosphate (DMAPP), two major building blocks of isoprenoid compounds. Catalyzes the conversion of 4-diphosphocytidyl-2-C-methyl-D-erythritol 2-phosphate (CDP-ME2P) to 2-C-methyl-D-erythritol 2,4-cyclodiphosphate (ME-CPP) with a corresponding release of cytidine 5-monophosphate (CMP). The chain is 2-C-methyl-D-erythritol 2,4-cyclodiphosphate synthase from Enterococcus faecalis (strain ATCC 700802 / V583).